The primary structure comprises 139 residues: Single-stranded DNA-binding protein 2 (139 aa).

One can recognise an SSB domain in the interval 1 to 104 (MLNRTVLVGR…VVADSVQFLE (104 aa)). The segment at 103–139 (LEPKNNNKQNNQQHNGQTQTGNNPFDNTEEDFSDLPF) is disordered. The span at 106-125 (KNNNKQNNQQHNGQTQTGNN) shows a compositional bias: low complexity. Over residues 129 to 139 (NTEEDFSDLPF) the composition is skewed to acidic residues.

In terms of assembly, homotetramer.

The protein is Single-stranded DNA-binding protein 2 (ssb-p) of Staphylococcus aureus (strain COL).